The following is a 290-amino-acid chain: Nucleotide-binding protein Xfasm12_0753 (290 aa).

13-20 contributes to the ATP binding site; the sequence is GLSGSGKS. GTP is bound at residue 65–68; it reads DIRS.

It belongs to the RapZ-like family.

In terms of biological role, displays ATPase and GTPase activities. In Xylella fastidiosa (strain M12), this protein is Nucleotide-binding protein Xfasm12_0753.